The primary structure comprises 520 residues: General transcription factor 3C polypeptide 5 (520 aa).

The residue at position 2 (alanine 2) is an N-acetylalanine. Residues 466–520 (LFSNTGKADRGKEQLMFESGEEEEEEEEEEEEEEEDFKPSDGSENEMETEILDYV) are disordered. Acidic residues-rich tracts occupy residues 484-501 (SGEE…EEED) and 508-520 (SENE…LDYV).

This sequence belongs to the TFIIIC subunit 5 family. As to quaternary structure, part of the TFIIIC subcomplex TFIIIC2, consisting of six subunits, GTF3C1, GTF3C2, GTF3C3, GTF3C4, GTF3C5 and GTF3C6. Interacts with BRF1, GTF3C6 and TBP.

The protein localises to the nucleus. Functionally, involved in RNA polymerase III-mediated transcription. Integral, tightly associated component of the DNA-binding TFIIIC2 subcomplex that directly binds tRNA and virus-associated RNA promoters. This Mus musculus (Mouse) protein is General transcription factor 3C polypeptide 5 (Gtf3c5).